We begin with the raw amino-acid sequence, 140 residues long: MEKKLMRIGVSLPGELLDKFDKTLMKRGYSSRSEGIRDAIRTYNQHYEWMQQIKGARAATISLVYDCSKKGITSTLAKIQHEYIDLITSSVHFHIEEDFCFETIILEGEGEKIVELAEKILSLKGVKHSRLTTMPEVKTE.

Ni(2+)-binding residues include His-81, His-92, His-94, and Cys-100.

Belongs to the transcriptional regulatory CopG/NikR family. It depends on Ni(2+) as a cofactor.

Functionally, transcriptional regulator. In Methanosarcina acetivorans (strain ATCC 35395 / DSM 2834 / JCM 12185 / C2A), this protein is Putative nickel-responsive regulator 2.